The chain runs to 378 residues: Chaperone protein DnaJ (378 aa).

The J domain occupies Glu5–Gly69. The segment at Gly134–Ala216 adopts a CR-type zinc-finger fold. Positions 147, 150, 164, 167, 190, 193, 204, and 207 each coordinate Zn(2+). CXXCXGXG motif repeat units lie at residues Cys147–Gly154, Cys164–Gly171, Cys190–Gly197, and Cys204–Gly211.

Belongs to the DnaJ family. Homodimer. Zn(2+) serves as cofactor.

The protein resides in the cytoplasm. Participates actively in the response to hyperosmotic and heat shock by preventing the aggregation of stress-denatured proteins and by disaggregating proteins, also in an autonomous, DnaK-independent fashion. Unfolded proteins bind initially to DnaJ; upon interaction with the DnaJ-bound protein, DnaK hydrolyzes its bound ATP, resulting in the formation of a stable complex. GrpE releases ADP from DnaK; ATP binding to DnaK triggers the release of the substrate protein, thus completing the reaction cycle. Several rounds of ATP-dependent interactions between DnaJ, DnaK and GrpE are required for fully efficient folding. Also involved, together with DnaK and GrpE, in the DNA replication of plasmids through activation of initiation proteins. In Streptococcus pyogenes, this protein is Chaperone protein DnaJ.